We begin with the raw amino-acid sequence, 417 residues long: Acid phosphatase (417 aa).

The N-terminal stretch at 1-19 is a signal peptide; it reads MFTKQSLVTLLGGLSLAVA. N-linked (GlcNAc...) asparagine glycosylation is found at Asn122, Asn187, and Asn209. The active-site Proton donor is Asp216. Asn218, Asn333, and Asn383 each carry an N-linked (GlcNAc...) asparagine glycan.

Post-translationally, the N-terminus is blocked.

It is found in the secreted. It catalyses the reaction a phosphate monoester + H2O = an alcohol + phosphate. The protein is Acid phosphatase (phoA) of Aspergillus niger.